Consider the following 547-residue polypeptide: Chaperonin GroEL (547 aa).

Residues 30-33 (TLGP), K51, 87-91 (DGTTT), G415, and D495 contribute to the ATP site.

This sequence belongs to the chaperonin (HSP60) family. Forms a cylinder of 14 subunits composed of two heptameric rings stacked back-to-back. Interacts with the co-chaperonin GroES.

Its subcellular location is the cytoplasm. It catalyses the reaction ATP + H2O + a folded polypeptide = ADP + phosphate + an unfolded polypeptide.. Its function is as follows. Together with its co-chaperonin GroES, plays an essential role in assisting protein folding. The GroEL-GroES system forms a nano-cage that allows encapsulation of the non-native substrate proteins and provides a physical environment optimized to promote and accelerate protein folding. The sequence is that of Chaperonin GroEL from Allorhizobium ampelinum (strain ATCC BAA-846 / DSM 112012 / S4) (Agrobacterium vitis (strain S4)).